A 277-amino-acid polypeptide reads, in one-letter code: Ribosomal RNA small subunit methyltransferase I (277 aa).

It belongs to the methyltransferase superfamily. RsmI family.

Its subcellular location is the cytoplasm. The enzyme catalyses cytidine(1402) in 16S rRNA + S-adenosyl-L-methionine = 2'-O-methylcytidine(1402) in 16S rRNA + S-adenosyl-L-homocysteine + H(+). Catalyzes the 2'-O-methylation of the ribose of cytidine 1402 (C1402) in 16S rRNA. The protein is Ribosomal RNA small subunit methyltransferase I of Mycoplasma genitalium (strain ATCC 33530 / DSM 19775 / NCTC 10195 / G37) (Mycoplasmoides genitalium).